The following is a 160-amino-acid chain: Cyclic pyranopterin monophosphate synthase (160 aa).

Substrate-binding positions include 74–76 (LSH) and 112–113 (ME). Residue D127 is part of the active site.

This sequence belongs to the MoaC family. Homohexamer; trimer of dimers.

The catalysed reaction is (8S)-3',8-cyclo-7,8-dihydroguanosine 5'-triphosphate = cyclic pyranopterin phosphate + diphosphate. The protein operates within cofactor biosynthesis; molybdopterin biosynthesis. Functionally, catalyzes the conversion of (8S)-3',8-cyclo-7,8-dihydroguanosine 5'-triphosphate to cyclic pyranopterin monophosphate (cPMP). In Geotalea uraniireducens (strain Rf4) (Geobacter uraniireducens), this protein is Cyclic pyranopterin monophosphate synthase.